The sequence spans 302 residues: F-box protein At1g20360 (302 aa).

The F-box domain maps to 1–48 (MNSLPLHLLDQILFRLEPKSLAMMKSTNRTINSHISDPLFESEYFSRL).

The chain is F-box protein At1g20360 from Arabidopsis thaliana (Mouse-ear cress).